Here is a 227-residue protein sequence, read N- to C-terminus: MKRSAINDILGHTRQFFSQHDVHLPPFASFSPAQWQQLDTAAWEEVFDLKLGWDVTAFGRNNFAAHGLTLFTLRNGSAKGMPYVKCYAEKIMHVRDAQVTPMHFHWRKREDIINRGGGNLIVELWNADSNEQTADSDITVVIDGCRQKHTAGSQLRLSPGESICLPPGLYHSFWAEAGFGDVLVGEVSSVNDDDHDNHFLQPLDRYNLIDEDEPAQLVLCNEYRQFR.

D-fructose-binding positions include Lys-90, 103 to 110 (HFHWRKRE), His-171, Glu-186, and Asp-193. Residues His-103, His-105, Glu-110, and His-171 each contribute to the Mn(2+) site.

The protein belongs to the D-lyxose ketol-isomerase family. As to quaternary structure, homodimer; disulfide-linked. Dimerization is facilitated through a disulfide bond between the two monomers of the dimeric enzyme. Mn(2+) serves as cofactor.

The catalysed reaction is D-lyxose = D-xylulose. It carries out the reaction D-mannose = D-fructose. Functionally, sugar isomerase that catalyzes the reversible isomerization of D-lyxose to D-xylulose, and D-mannose to D-fructose. Shows similar activity toward D-lyxose and D-mannose with a turnover and catalytic efficiency for D-lyxose as a substrate only 1.1- and 1.3-fold higher than those for D-mannose, respectively. Shows weaker activity with L-gulose, D-talose, L-ribose and L-allose. Overexpression enables cell growth on the rare pentose D-lyxose as the sole carbon source. The polypeptide is D-lyxose/D-mannose isomerase (Escherichia coli O157:H7).